We begin with the raw amino-acid sequence, 341 residues long: uncharacterized protein (341 aa).

This is an uncharacterized protein from Methanocaldococcus jannaschii (strain ATCC 43067 / DSM 2661 / JAL-1 / JCM 10045 / NBRC 100440) (Methanococcus jannaschii).